Reading from the N-terminus, the 334-residue chain is Beta-1,3-N-acetylglucosaminyltransferase radical fringe (334 aa).

The Cytoplasmic segment spans residues Met-1–Arg-6. Residues Val-7 to Leu-29 form a helical; Signal-anchor for type II membrane protein membrane-spanning segment. At Pro-30–Gln-334 the chain is on the lumenal side. Arg-77 serves as a coordination point for substrate. N-linked (GlcNAc...) asparagine glycosylation is present at Asn-116. 2 cysteine pairs are disulfide-bonded: Cys-117/Cys-128 and Cys-146/Cys-210. A substrate-binding site is contributed by Asp-150. Asp-151 lines the Mn(2+) pocket. Residue Asp-240 is part of the active site. Residue His-264 coordinates Mn(2+). Cysteines 314 and 323 form a disulfide.

The protein belongs to the glycosyltransferase 31 family. Requires Mn(2+) as cofactor. Most abundantly expressed in adult brain. Expressed in most neurons of the brain but not in glial cells. Also detected to a lower extent in adult lung and kidney.

It localises to the golgi apparatus membrane. It catalyses the reaction 3-O-(alpha-L-fucosyl)-L-threonyl-[EGF-like domain protein] + UDP-N-acetyl-alpha-D-glucosamine = 3-O-(N-acetyl-beta-D-glucosaminyl-(1-&gt;3)-alpha-L-fucosyl)-L-threonyl-[EGF-like domain protein] + UDP + H(+). It carries out the reaction 3-O-(alpha-L-fucosyl)-L-seryl-[EGF-like domain protein] + UDP-N-acetyl-alpha-D-glucosamine = 3-O-(N-acetyl-beta-D-glucosaminyl-(1-&gt;3)-alpha-L-fucosyl)-L-seryl-[EGF-like domain protein] + UDP + H(+). Glycosyltransferase that initiates the elongation of O-linked fucose residues attached to EGF-like repeats in the extracellular domain of Notch molecules. Modulates NOTCH1 activity by modifying O-fucose residues at specific EGF-like domains resulting in enhancement of NOTCH1 activation by DLL1 and JAG1. Inhibits Notch signaling in postmitotic neurons of the brain. It may play a role in adult brain and in neurogenesis. It may play a role in limb development. The chain is Beta-1,3-N-acetylglucosaminyltransferase radical fringe from Rattus norvegicus (Rat).